The sequence spans 775 residues: MKLLSLLMLAGIAQAIVPPREPRPPTGGGNKLLTYKECVPRATISPRSTSLAWINSDEDGQYISQSDDGALILQNIVTNTNKTLVAADKVPKGYYDYWFKPDLSAVLWATNYTKQYRHSYFANYFILDIEKGSLTPLAQDQAGDIQYAQWSPVDNSIAYVRGNDLYIWNNGTTKRITENGGPDIFNGVPDWVYEEEIFGDRFALWFSPDGEYLAYLRFNETGVPTYTIPYYKNKQKIAPAYPRELEIRYPKVSAKNPTVQFHLLNIASSQESTIPVTAFPENDLVIGEVAWLSSGHDSVAYRAFNRVQDREKIVSIKVESKESKVIRERDGTDGWIDNLLSMSYIGDVNGKEYYVDISDASGWAHIYLYPVDGGKEIALTKGEWEVVAILKVDTKKKLIYFTSTKYHSTTRHVYSVSYDTNVMTPLVNDKEAAYYTASFSAKGGYYILSYQGPNVPYQELYSTKDSKKPLKTITSNDALLEKLKEYKLPMVSFFEIKLPSGETLNVKQRLPPNFNPHKKYPVLFTPYGGPGAQEVSQAWNSLDFKSYITSDPELEYVTWTVDNRGTGYKGRKFRSAVAKRLGFLEAQDQVFAAKELLKNRWADKDHIGIWGWSYGGFLTAKTLETDSGVFTFGISTAPVSDFRLYDSMYTERYMKTVELNADGYSETAVHKVDGFKNLKGHYLIQHGTGDDNVHFQNAAVLSNTLMNGGVTADKLTTQWFTDSDHGIRYDMDSTYQYKQLAKMVYDQKQRRPERPPMHQWSKRVLAALFGERAEE.

The N-terminal stretch at M1 to A15 is a signal peptide. 4 N-linked (GlcNAc...) asparagine glycosylation sites follow: N81, N111, N170, and N219. Catalysis depends on charge relay system residues S613, D690, and H725.

This sequence belongs to the peptidase S9B family.

It localises to the secreted. The enzyme catalyses Release of an N-terminal dipeptide, Xaa-Yaa-|-Zaa-, from a polypeptide, preferentially when Yaa is Pro, provided Zaa is neither Pro nor hydroxyproline.. Functionally, extracellular dipeptidyl-peptidase which removes N-terminal dipeptides sequentially from polypeptides having unsubstituted N-termini provided that the penultimate residue is proline. Contributes to pathogenicity. This is Dipeptidyl peptidase 4 (DPP4) from Trichophyton tonsurans (Scalp ringworm fungus).